Here is a 165-residue protein sequence, read N- to C-terminus: MDSKNGINNSQKARRTPKDRHLKIGGRDRRIRIPPSVAPQLFRLTKELGFKTDGETVSWLLQNAEPAIFAATGHGVTTTSNEDIQPNRNFPSYTFNGDNISNNVFPCTVVNTGHRQMVFPVSTMTDHAPSTNYSTISDNYNSTFNGNATASDTTSAATTTATTTV.

The segment covering 1 to 11 (MDSKNGINNSQ) has biased composition (polar residues). Disordered stretches follow at residues 1–21 (MDSK…KDRH) and 146–165 (GNAT…TTTV). The span at 12–21 (KARRTPKDRH) shows a compositional bias: basic residues. One can recognise a TCP domain in the interval 17–71 (PKDRHLKIGGRDRRIRIPPSVAPQLFRLTKELGFKTDGETVSWLLQNAEPAIFAA). The span at 148 to 165 (ATASDTTSAATTTATTTV) shows a compositional bias: low complexity.

As to expression, mostly in anther in young buds.

The protein resides in the nucleus. In terms of biological role, required during early processes in pollen development. The sequence is that of Transcription factor TCP16 (TCP16) from Arabidopsis thaliana (Mouse-ear cress).